The primary structure comprises 267 residues: Soluble interferon gamma receptor OPG193 (267 aa).

A signal peptide spans 1–17; the sequence is MRYIIILAVLFINSIHA. 2 N-linked (GlcNAc...) asparagine; by host glycosylation sites follow: N42 and N150.

The protein belongs to the type II cytokine receptor family. In terms of assembly, homodimer. Interacts with host IFNG.

The protein localises to the secreted. Its function is as follows. Counteracts the antiviral effects of host IFN-gamma. Acts as a soluble IFN-gamma receptor and thus inhibits the interaction between host IFN-gamma and its receptor. The protein is Soluble interferon gamma receptor OPG193 (OPG193) of Cynomys gunnisoni (Gunnison's prairie dog).